A 382-amino-acid polypeptide reads, in one-letter code: F-box protein At3g19470 (382 aa).

The region spanning 1-44 is the F-box domain; sequence MYNLPRDLPEEVLCRIPLTSLRPVRSTCKKWSTLSKCGSFAKKH.

The protein is F-box protein At3g19470 of Arabidopsis thaliana (Mouse-ear cress).